Reading from the N-terminus, the 673-residue chain is Vasorin (673 aa).

The N-terminal stretch at 1–23 is a signal peptide; the sequence is MCSRVPLLLPLLLLLALGPGVQG. The 28-residue stretch at 24-51 folds into the LRRNT domain; it reads CPSGCQCSQPQTVFCTARQGTTVPRDVP. Residues 24–575 are Extracellular-facing; sequence CPSGCQCSQP…VTQAREGNLP (552 aa). 10 LRR repeats span residues 52–74, 77–98, 101–122, 125–146, 149–170, 171–191, 193–214, 217–238, 240–262, and 265–287; these read PDTV…SFAG, GLQL…VFQP, NLSN…TFRG, RLER…AFDT, RLLE…RLPR, LLLL…ILDT, NVEA…LFSR, NLHD…IRGL, GLTR…DLAG, and ALQE…SGLF. N-linked (GlcNAc...) asparagine glycosylation is present at Asn101. A glycan (N-linked (GlcNAc...) (complex) asparagine) is linked at Asn117. Asn273 carries an N-linked (GlcNAc...) asparagine glycan. The region spanning 298–351 is the LRRCT domain; it reads NPFNCVCPLSWFGPWVRESHVTLASPEETRCHFPPKNAGRLLLELDYADFGCPA. Positions 358 to 370 are enriched in low complexity; sequence VPTTRPVVREPTA. Positions 358-404 are disordered; sequence VPTTRPVVREPTALSSSLAPTWLSPTEPATEAPSPPSTAPPTVGPVP. Residues 390–404 show a composition bias toward pro residues; that stretch reads PSPPSTAPPTVGPVP. Residues 405 to 442 form the EGF-like domain; it reads QPQDCPPSTCLNGGTCHLGTRHHLACLCPEGFTGLYCE. 3 disulfides stabilise this stretch: Cys409/Cys420, Cys414/Cys430, and Cys432/Cys441. The Fibronectin type-III domain maps to 460–558; the sequence is PPRSLTLGIE…ACGEAHTPPA (99 aa). Residues Asn500 and Asn528 are each glycosylated (N-linked (GlcNAc...) asparagine). A helical transmembrane segment spans residues 576 to 596; it reads LLIAPALAAVLLAALAAVGAA. At 597-673 the chain is on the cytoplasmic side; that stretch reads YCVRRGRAMA…QSPLHAKPYI (77 aa).

Interacts with TGFB1, TGFB2 and TGFB3. N-glycosylated. N-glycan heterogeneity at Asn-117: Hex5HexNAc4 (minor), dHex1Hex5HexNAc4 (major), Hex6HexNAc5 (minor) and dHex1Hex6HexNAc5 (minor). Expressed at highest levels in aorta, at intermediate levels in kidney and placenta and at lowest levels in brain, heart, liver, lung and skeletal muscle. Within the aorta, the strongest expression is found in the tunica media of the proximal ascending aorta, the descending thoracic aorta, the abdominal aorta and the coronary arteries. Within the kidney, expression is found in the interstitial cells.

The protein resides in the membrane. The protein localises to the secreted. Its function is as follows. May act as an inhibitor of TGF-beta signaling. This Homo sapiens (Human) protein is Vasorin (VASN).